The primary structure comprises 742 residues: 5-methyltetrahydropteroyltriglutamate--homocysteine methyltransferase (742 aa).

5-methyltetrahydropteroyltri-L-glutamate-binding positions include 18 to 21 (REWK) and Lys112. L-homocysteine contacts are provided by residues 420 to 422 (IGS) and Glu473. L-methionine contacts are provided by residues 420-422 (IGS) and Glu473. Position 550 (Trp550) interacts with 5-methyltetrahydropteroyltri-L-glutamate. Asp588 provides a ligand contact to L-homocysteine. Asp588 serves as a coordination point for L-methionine. Glu594 contributes to the 5-methyltetrahydropteroyltri-L-glutamate binding site. Zn(2+)-binding residues include His630, Cys632, and Glu654. The active-site Proton donor is the His683. Cys715 serves as a coordination point for Zn(2+).

It belongs to the vitamin-B12 independent methionine synthase family. The cofactor is Zn(2+).

The catalysed reaction is 5-methyltetrahydropteroyltri-L-glutamate + L-homocysteine = tetrahydropteroyltri-L-glutamate + L-methionine. It participates in amino-acid biosynthesis; L-methionine biosynthesis via de novo pathway; L-methionine from L-homocysteine (MetE route): step 1/1. Functionally, catalyzes the transfer of a methyl group from 5-methyltetrahydrofolate to homocysteine resulting in methionine formation. This chain is 5-methyltetrahydropteroyltriglutamate--homocysteine methyltransferase, found in Staphylococcus aureus (strain JH9).